Reading from the N-terminus, the 98-residue chain is Large ribosomal subunit protein uL23 (98 aa).

Belongs to the universal ribosomal protein uL23 family. Part of the 50S ribosomal subunit. Contacts protein L29, and trigger factor when it is bound to the ribosome.

Its function is as follows. One of the early assembly proteins it binds 23S rRNA. One of the proteins that surrounds the polypeptide exit tunnel on the outside of the ribosome. Forms the main docking site for trigger factor binding to the ribosome. The sequence is that of Large ribosomal subunit protein uL23 from Lactobacillus delbrueckii subsp. bulgaricus (strain ATCC 11842 / DSM 20081 / BCRC 10696 / JCM 1002 / NBRC 13953 / NCIMB 11778 / NCTC 12712 / WDCM 00102 / Lb 14).